The primary structure comprises 244 residues: Eukaryotic translation initiation factor 6 (244 aa).

Belongs to the eIF-6 family. Monomer. Associates with the 60S ribosomal subunit.

It is found in the cytoplasm. Its subcellular location is the nucleus. It localises to the nucleolus. Its function is as follows. Binds to the 60S ribosomal subunit and prevents its association with the 40S ribosomal subunit to form the 80S initiation complex in the cytoplasm. May also be involved in ribosome biogenesis. The polypeptide is Eukaryotic translation initiation factor 6 (eif6) (Dictyostelium discoideum (Social amoeba)).